The chain runs to 290 residues: Elongation factor Ts (290 aa).

The segment at T81 to V84 is involved in Mg(2+) ion dislocation from EF-Tu.

Belongs to the EF-Ts family.

It localises to the cytoplasm. Functionally, associates with the EF-Tu.GDP complex and induces the exchange of GDP to GTP. It remains bound to the aminoacyl-tRNA.EF-Tu.GTP complex up to the GTP hydrolysis stage on the ribosome. The protein is Elongation factor Ts of Vesicomyosocius okutanii subsp. Calyptogena okutanii (strain HA).